The primary structure comprises 129 residues: Histone H2B.2 (129 aa).

Positions 1 to 19 (MAPKAEKKPASKAPAEKKP) are enriched in basic and acidic residues. Residues 1-37 (MAPKAEKKPASKAPAEKKPAAKKTASSDSKKRTKTRK) are disordered. 2 positions are modified to N6-acetyllysine; alternate: Lys7 and Lys8. Glycyl lysine isopeptide (Lys-Gly) (interchain with G-Cter in SUMO); alternate cross-links involve residues Lys7 and Lys8. Ser11 carries the phosphoserine modification. Lys12 is subject to N6-acetyllysine. Residue Lys17 is modified to N6-acetyllysine; alternate. Lys17 is covalently cross-linked (Glycyl lysine isopeptide (Lys-Gly) (interchain with G-Cter in SUMO); alternate). Lys18 is covalently cross-linked (Glycyl lysine isopeptide (Lys-Gly) (interchain with G-Cter in SUMO)). Residue Lys123 forms a Glycyl lysine isopeptide (Lys-Gly) (interchain with G-Cter in ubiquitin) linkage.

It belongs to the histone H2B family. In terms of assembly, the nucleosome is a histone octamer containing two molecules each of H2A, H2B, H3 and H4 assembled in one H3-H4 heterotetramer and two H2A-H2B heterodimers. The octamer wraps approximately 147 bp of DNA. Monoubiquitinated by the UBC2-BRE1 complex to form H2BK123ub1. H2BK123ub1 gives a specific tag for epigenetic transcriptional activation and is also prerequisite for H3K4me and H3K79me formation. H2BK123ub1 also modulates the formation of double-strand breaks during meiosis and is a prerequisite for DNA-damage checkpoint activation. Post-translationally, phosphorylated by STE20 to form H2BS10ph during progression through meiotic prophase. May be correlated with chromosome condensation. In terms of processing, acetylated by GCN5 to form H2BK11ac and H2BK16ac. H2BK16ac can also be formed by ESA1. Acetylation of N-terminal lysines and particularly formation of H2BK11acK16ac has a positive effect on transcription. Sumoylation to form H2BK6su or H2BK7su, and probably also H2BK16su or H2BK17su, occurs preferentially near the telomeres and represses gene transcription.

The protein resides in the nucleus. The protein localises to the chromosome. In terms of biological role, core component of nucleosome. Nucleosomes wrap and compact DNA into chromatin, limiting DNA accessibility to the cellular machineries which require DNA as a template. Histones thereby play a central role in transcription regulation, DNA repair, DNA replication and chromosomal stability. DNA accessibility is regulated via a complex set of post-translational modifications of histones, also called histone code, and nucleosome remodeling. This is Histone H2B.2 (HTB2) from Meyerozyma guilliermondii (strain ATCC 6260 / CBS 566 / DSM 6381 / JCM 1539 / NBRC 10279 / NRRL Y-324) (Yeast).